We begin with the raw amino-acid sequence, 217 residues long: GTP cyclohydrolase 1 (217 aa).

The Zn(2+) site is built by cysteine 109, histidine 112, and cysteine 180.

Belongs to the GTP cyclohydrolase I family. As to quaternary structure, homomer.

The enzyme catalyses GTP + H2O = 7,8-dihydroneopterin 3'-triphosphate + formate + H(+). It functions in the pathway cofactor biosynthesis; 7,8-dihydroneopterin triphosphate biosynthesis; 7,8-dihydroneopterin triphosphate from GTP: step 1/1. The sequence is that of GTP cyclohydrolase 1 from Aliivibrio salmonicida (strain LFI1238) (Vibrio salmonicida (strain LFI1238)).